The sequence spans 321 residues: NADH-ubiquinone oxidoreductase chain 1 (321 aa).

A run of 8 helical transmembrane segments spans residues I7 to M27, I73 to I93, L104 to G124, V148 to L168, H175 to A195, F227 to I247, E256 to I276, and L297 to I317.

Belongs to the complex I subunit 1 family.

It localises to the mitochondrion inner membrane. The catalysed reaction is a ubiquinone + NADH + 5 H(+)(in) = a ubiquinol + NAD(+) + 4 H(+)(out). Functionally, core subunit of the mitochondrial membrane respiratory chain NADH dehydrogenase (Complex I) that is believed to belong to the minimal assembly required for catalysis. Complex I functions in the transfer of electrons from NADH to the respiratory chain. The immediate electron acceptor for the enzyme is believed to be ubiquinone. This is NADH-ubiquinone oxidoreductase chain 1 (MT-ND1) from Varanus dumerilii (Dumeril's monitor).